A 637-amino-acid polypeptide reads, in one-letter code: tRNA uridine 5-carboxymethylaminomethyl modification enzyme MnmG (637 aa).

Residues 15-20, I127, and S182 each bind FAD; that span reads GAGHAG. Position 276–290 (276–290) interacts with NAD(+); that stretch reads GPRYCPSIEDKIVRF. Q373 lines the FAD pocket.

The protein belongs to the MnmG family. As to quaternary structure, homodimer. Heterotetramer of two MnmE and two MnmG subunits. It depends on FAD as a cofactor.

The protein localises to the cytoplasm. NAD-binding protein involved in the addition of a carboxymethylaminomethyl (cmnm) group at the wobble position (U34) of certain tRNAs, forming tRNA-cmnm(5)s(2)U34. The chain is tRNA uridine 5-carboxymethylaminomethyl modification enzyme MnmG from Streptococcus pneumoniae (strain Hungary19A-6).